The primary structure comprises 848 residues: Protein translocase subunit SecA (848 aa).

Residues glutamine 86, 104-108 (GEGKT), and aspartate 508 each bind ATP. Residues cysteine 833, cysteine 835, cysteine 844, and cysteine 845 each contribute to the Zn(2+) site.

Belongs to the SecA family. In terms of assembly, monomer and homodimer. Part of the essential Sec protein translocation apparatus which comprises SecA, SecYEG and auxiliary proteins SecDF. Other proteins may also be involved. Zn(2+) serves as cofactor.

Its subcellular location is the cell membrane. The protein localises to the cytoplasm. The enzyme catalyses ATP + H2O + cellular proteinSide 1 = ADP + phosphate + cellular proteinSide 2.. Part of the Sec protein translocase complex. Interacts with the SecYEG preprotein conducting channel. Has a central role in coupling the hydrolysis of ATP to the transfer of proteins into and across the cell membrane, serving as an ATP-driven molecular motor driving the stepwise translocation of polypeptide chains across the membrane. This is Protein translocase subunit SecA from Caldicellulosiruptor saccharolyticus (strain ATCC 43494 / DSM 8903 / Tp8T 6331).